A 124-amino-acid chain; its full sequence is Fluoride-specific ion channel FluC (124 aa).

The next 4 membrane-spanning stretches (helical) occupy residues L5 to Q27, I42 to P62, E63 to S83, and L95 to L115. Residues G74 and T77 each contribute to the Na(+) site.

Belongs to the fluoride channel Fluc/FEX (TC 1.A.43) family.

It is found in the cell inner membrane. The enzyme catalyses fluoride(in) = fluoride(out). With respect to regulation, na(+) is not transported, but it plays an essential structural role and its presence is essential for fluoride channel function. In terms of biological role, fluoride-specific ion channel. Important for reducing fluoride concentration in the cell, thus reducing its toxicity. The protein is Fluoride-specific ion channel FluC of Shewanella piezotolerans (strain WP3 / JCM 13877).